Consider the following 148-residue polypeptide: Large ribosomal subunit protein uL13 (148 aa).

This sequence belongs to the universal ribosomal protein uL13 family. Part of the 50S ribosomal subunit.

In terms of biological role, this protein is one of the early assembly proteins of the 50S ribosomal subunit, although it is not seen to bind rRNA by itself. It is important during the early stages of 50S assembly. The protein is Large ribosomal subunit protein uL13 of Oenococcus oeni (strain ATCC BAA-331 / PSU-1).